Reading from the N-terminus, the 241-residue chain is 2-C-methyl-D-erythritol 4-phosphate cytidylyltransferase (241 aa).

Belongs to the IspD/TarI cytidylyltransferase family. IspD subfamily.

The enzyme catalyses 2-C-methyl-D-erythritol 4-phosphate + CTP + H(+) = 4-CDP-2-C-methyl-D-erythritol + diphosphate. It participates in isoprenoid biosynthesis; isopentenyl diphosphate biosynthesis via DXP pathway; isopentenyl diphosphate from 1-deoxy-D-xylulose 5-phosphate: step 2/6. Its function is as follows. Catalyzes the formation of 4-diphosphocytidyl-2-C-methyl-D-erythritol from CTP and 2-C-methyl-D-erythritol 4-phosphate (MEP). The polypeptide is 2-C-methyl-D-erythritol 4-phosphate cytidylyltransferase (Hahella chejuensis (strain KCTC 2396)).